We begin with the raw amino-acid sequence, 435 residues long: Glutamate-1-semialdehyde 2,1-aminomutase (435 aa).

K266 carries the post-translational modification N6-(pyridoxal phosphate)lysine.

Belongs to the class-III pyridoxal-phosphate-dependent aminotransferase family. HemL subfamily. As to quaternary structure, homodimer. The cofactor is pyridoxal 5'-phosphate.

It is found in the cytoplasm. The catalysed reaction is (S)-4-amino-5-oxopentanoate = 5-aminolevulinate. The protein operates within porphyrin-containing compound metabolism; protoporphyrin-IX biosynthesis; 5-aminolevulinate from L-glutamyl-tRNA(Glu): step 2/2. The sequence is that of Glutamate-1-semialdehyde 2,1-aminomutase from Coxiella burnetii (strain Dugway 5J108-111).